We begin with the raw amino-acid sequence, 337 residues long: MMSAMETNMVLILTIFYNAYFLLAISSQLLLLYLMLKCQNRSLHEMRIYLFNILGLQFISTFSAFVLQCRLKRVTLKHFCRIVPSSGTVAMLCYGPCKYLGNIVCEVLFHILQTSLIACATALIIAFYYRYEMLTNNSFTRSGHYKQLVISYCVPLVFLICEVLSPNDVNKLVAELTVLHPTYGLENYAILGFSDVKTVAASSQTLMLMIGLYGTPFIALVFRKKIIKILHSSRSYHAEKIVQTKSMIQGLTLQTLLPLICYCPGFTYYIYSQYTQSSSLFVEFAVSPYGFVYTIFDPLLTIYYVLPYRRTFKAIFSKHNSTTSATFVHSETARRVA.

Transmembrane regions (helical) follow at residues 10 to 30 (VLILTIFYNAYFLLAISSQLL), 48 to 68 (IYLFNILGLQFISTFSAFVLQ), 107 to 127 (VLFHILQTSLIACATALIIAF), 147 to 167 (QLVISYCVPLVFLICEVLSPN), 202 to 222 (SSQTLMLMIGLYGTPFIALVF), 250 to 270 (GLTLQTLLPLICYCPGFTYYI), and 280 to 300 (LFVEFAVSPYGFVYTIFDPLL).

This sequence belongs to the nematode receptor-like protein srd family.

The protein localises to the membrane. The protein is Serpentine receptor class delta-50 of Caenorhabditis elegans.